A 296-amino-acid chain; its full sequence is Phosphatidylglycerol--prolipoprotein diacylglyceryl transferase (296 aa).

The next 4 membrane-spanning stretches (helical) occupy residues 10–30, 57–77, 92–112, and 119–139; these read IAFSLGPVQVHWYGLMYLAAF, LLFYGMLGVVLGGRIGYMLFY, VWEGGMSFHGGLLGVLIACGL, and LHFFDVMDFVAPLVPLGLGFG. R140 serves as a coordination point for a 1,2-diacyl-sn-glycero-3-phospho-(1'-sn-glycerol). A run of 3 helical transmembrane segments spans residues 194 to 214, 220 to 240, and 255 to 275; these read QLYEAALEGVVMFVVLWTFSM, YAVSGLFALLYGVFRFIVEFV, and LTMGQILSLPLIGVGLVLLAL.

The protein belongs to the Lgt family.

Its subcellular location is the cell inner membrane. The enzyme catalyses L-cysteinyl-[prolipoprotein] + a 1,2-diacyl-sn-glycero-3-phospho-(1'-sn-glycerol) = an S-1,2-diacyl-sn-glyceryl-L-cysteinyl-[prolipoprotein] + sn-glycerol 1-phosphate + H(+). Its pathway is protein modification; lipoprotein biosynthesis (diacylglyceryl transfer). Catalyzes the transfer of the diacylglyceryl group from phosphatidylglycerol to the sulfhydryl group of the N-terminal cysteine of a prolipoprotein, the first step in the formation of mature lipoproteins. This chain is Phosphatidylglycerol--prolipoprotein diacylglyceryl transferase, found in Xanthomonas campestris pv. campestris (strain 8004).